The sequence spans 242 residues: Triosephosphate isomerase (242 aa).

8-10 contributes to the substrate binding site; sequence NWK. The Electrophile role is filled by His98. Catalysis depends on Glu167, which acts as the Proton acceptor. Substrate-binding positions include Gly173, Ser205, and 226 to 227; that span reads GG.

This sequence belongs to the triosephosphate isomerase family. In terms of assembly, homodimer.

The protein resides in the cytoplasm. It carries out the reaction D-glyceraldehyde 3-phosphate = dihydroxyacetone phosphate. It participates in carbohydrate biosynthesis; gluconeogenesis. Its pathway is carbohydrate degradation; glycolysis; D-glyceraldehyde 3-phosphate from glycerone phosphate: step 1/1. Functionally, involved in the gluconeogenesis. Catalyzes stereospecifically the conversion of dihydroxyacetone phosphate (DHAP) to D-glyceraldehyde-3-phosphate (G3P). The polypeptide is Triosephosphate isomerase (Mesomycoplasma hyopneumoniae (strain 7448) (Mycoplasma hyopneumoniae)).